The sequence spans 185 residues: Elongation factor P (185 aa).

The protein belongs to the elongation factor P family.

It localises to the cytoplasm. It functions in the pathway protein biosynthesis; polypeptide chain elongation. In terms of biological role, involved in peptide bond synthesis. Stimulates efficient translation and peptide-bond synthesis on native or reconstituted 70S ribosomes in vitro. Probably functions indirectly by altering the affinity of the ribosome for aminoacyl-tRNA, thus increasing their reactivity as acceptors for peptidyl transferase. This chain is Elongation factor P, found in Bacillus anthracis (strain CDC 684 / NRRL 3495).